A 462-amino-acid chain; its full sequence is ATP synthase subunit beta (462 aa).

151 to 158 provides a ligand contact to ATP; it reads GGAGVGKT.

Belongs to the ATPase alpha/beta chains family. F-type ATPases have 2 components, CF(1) - the catalytic core - and CF(0) - the membrane proton channel. CF(1) has five subunits: alpha(3), beta(3), gamma(1), delta(1), epsilon(1). CF(0) has four main subunits: a(1), b(1), b'(1) and c(9-12).

Its subcellular location is the cell inner membrane. It carries out the reaction ATP + H2O + 4 H(+)(in) = ADP + phosphate + 5 H(+)(out). Produces ATP from ADP in the presence of a proton gradient across the membrane. The catalytic sites are hosted primarily by the beta subunits. This chain is ATP synthase subunit beta, found in Chlorobium limicola (strain DSM 245 / NBRC 103803 / 6330).